Reading from the N-terminus, the 624-residue chain is MNAANRRKSTSTVGITGRKDATRMKIEQMEKERKERRKTMMQRKEARKQEHMKNIEAGNPGDVDFIGLVEEWRREQENKIGDKSPPSLFASTNSNICIAVRKRPISDKERQKLDHDSVSCFQNKVWIHSAKLKVDGITKYLTHNSFQLDHTFGEDSTTEQIYLATTLPLVDHVVSTQGRATVFCYGQTGSGKTYTMNGIQQILAYDLYGQLAEHTDDLEITVAFFELYSGNVLDLLHGCQRCKLLEDGNGEVNITGLREVPAPTPEAFLQVIEEGHSLRTTQKTEANDASSRSHAICQVFLRDYGGNLRGKLGLVDLAGSERGSDTKQHNSQRRTESADINTSLLALKECIRALGQKSAHVPYRGSKLTLILKDCFSPDSKTTMVATVSPGASAADHSLNTLRYADRIKEQRVSSNGQRGKAAKASNREIMPSKERLMRIAAATEQADDQHSAFVQKMLAEHDQVQADANDYAFTEQVDEEEADDEEGDYEEESEDLDYEDSEGQDYEEAVESQYDHSQEAQEGEEELRRTVQAVFELEEALLNQHMSNIQANAEMLTQEGKLLQSVQAGGLSEDEMHNYAIQLAEFLDKKESLIYKLQSKLDEFQEQLAREQELARQVQLTQY.

The disordered stretch occupies residues Met-1–Asn-59. The interval Met-1–Pro-85 is globular. Composition is skewed to basic and acidic residues over residues Gly-17–Arg-33 and Gln-42–Asn-54. The region spanning Asn-95–Gln-411 is the Kinesin motor domain. ATP is bound at residue Gly-186–Thr-193. The stretch at Ser-426–Tyr-624 forms a coiled coil. The span at Val-478 to Val-511 shows a compositional bias: acidic residues. A disordered region spans residues Val-478–Leu-528.

This sequence belongs to the TRAFAC class myosin-kinesin ATPase superfamily. Kinesin family. MCAK/KIF2 subfamily.

It localises to the cytoplasm. The protein resides in the cytoskeleton. Involved in anaphase spindle elongation. The polypeptide is Diatom spindle kinesin-1 (DSK1) (Cylindrotheca fusiformis (Marine diatom)).